Consider the following 184-residue polypeptide: Pyridoxal 5'-phosphate synthase subunit PdxT (184 aa).

46–48 (GES) provides a ligand contact to L-glutamine. The active-site Nucleophile is C75. Residues R101 and 129-130 (IR) contribute to the L-glutamine site. Catalysis depends on charge relay system residues H165 and E167.

It belongs to the glutaminase PdxT/SNO family. As to quaternary structure, in the presence of PdxS, forms a dodecamer of heterodimers. Only shows activity in the heterodimer.

The catalysed reaction is aldehydo-D-ribose 5-phosphate + D-glyceraldehyde 3-phosphate + L-glutamine = pyridoxal 5'-phosphate + L-glutamate + phosphate + 3 H2O + H(+). It catalyses the reaction L-glutamine + H2O = L-glutamate + NH4(+). It functions in the pathway cofactor biosynthesis; pyridoxal 5'-phosphate biosynthesis. Its function is as follows. Catalyzes the hydrolysis of glutamine to glutamate and ammonia as part of the biosynthesis of pyridoxal 5'-phosphate. The resulting ammonia molecule is channeled to the active site of PdxS. The chain is Pyridoxal 5'-phosphate synthase subunit PdxT from Staphylococcus haemolyticus (strain JCSC1435).